Consider the following 224-residue polypeptide: Protein DEHYDRATION-INDUCED 19 homolog 4 (224 aa).

The segment covering 1-12 (MDSNWINCPSVF) has biased composition (polar residues). Residues 1-23 (MDSNWINCPSVFSSSSSSSRRCQ) are disordered. The segment covering 13–23 (SSSSSSSRRCQ) has biased composition (low complexity). The residue at position 117 (threonine 117) is a Phosphothreonine.

Belongs to the Di19 family. Phosphorylated in vitro by CPK3 or CPK11. As to expression, expressed in seedlings, roots, leaves, stems, flowers and siliques.

It is found in the cytoplasm. It localises to the perinuclear region. The chain is Protein DEHYDRATION-INDUCED 19 homolog 4 (DI19-4) from Arabidopsis thaliana (Mouse-ear cress).